The sequence spans 498 residues: MRILNYTIINLVMSKHLLLNINKTQKGIIHIIGIGGIGMSAIAEILHNSNCKVQGSDAQSNDNINKLQKLGIEVFIGHNANNISQAQIVVHSSAIEFDNVELIAAKNNNKTVLHRSDILAEIMKGKYVIAVSGSSGKTTTTAMIASIFDHSGIDATVTVGGILNSYKSNFKLGGSDTFLIEADESDGTMLKIPAKIAVITSINNDHIDYYGTFDNIKNAFSQFVNNAGSAVLPDSVDIDYDAGNSITFGFENGSIRASNIKQHANSIEFDVLNNWIPALRAGMTKGKCTEMSSQCVTLGSSPLKNIVLSNAIGIHKVSNALAAISVAIKLGISDADIKKGLLEFQGVARRFSLIADIKGVKLIEDYAHHPNEIYATLTAARSITKGKVIGIIEPLRFARIRNFFDEFIRIFMMFDYVILTPVHPPEDKPIPGCGIDDIQKALISNGFNNTKIMNDALLISHFISDSTSPSNIVLFIGAGSNIAKLAKETAALIAEVKV.

An ATP-binding site is contributed by 133-139 (GSSGKTT).

Belongs to the MurCDEF family.

It is found in the cytoplasm. It carries out the reaction UDP-N-acetyl-alpha-D-muramate + L-alanine + ATP = UDP-N-acetyl-alpha-D-muramoyl-L-alanine + ADP + phosphate + H(+). The protein operates within cell wall biogenesis; peptidoglycan biosynthesis. Cell wall formation. The protein is UDP-N-acetylmuramate--L-alanine ligase of Wolbachia pipientis wMel.